The chain runs to 333 residues: MAFRLKLVPEKTNFDFFRWQWATFGAAIVMMIASVILPLVIGLNFGIDFKGGTTIRTESTTAIDVGVYRAALEPLELGDVIISEVRDPSFREDQHVAMIRIQMQEDGQGAEGQGAQGQELVNKVETALTAVDPALKITSFESVGPKVSGELVWTAVWSLLAATVVIMFYIWVRFEWQFALGAVVALVHDVLLTVGLFAVLQLKFDLTTVAALLTITGYSINDTVVVFDRLRENLIKYKTMPLRDVMNLSVNETLSRTVMTGMTTLLALVPMLIWGGDVIRGFVFAMVWGVFTGTYSSVYVAKNIVLFIGLDRNKEKKDPSDKFFSNGAQDGAP.

6 consecutive transmembrane segments (helical) span residues 27 to 47 (AIVM…NFGI), 152 to 172 (VWTA…YIWV), 180 to 200 (LGAV…FAVL), 207 to 227 (TTVA…VVVF), 253 to 275 (TLSR…LIWG), and 285 to 307 (AMVW…IVLF).

This sequence belongs to the SecD/SecF family. SecF subfamily. In terms of assembly, forms a complex with SecD. Part of the essential Sec protein translocation apparatus which comprises SecA, SecYEG and auxiliary proteins SecDF-YajC and YidC.

The protein localises to the cell inner membrane. Its function is as follows. Part of the Sec protein translocase complex. Interacts with the SecYEG preprotein conducting channel. SecDF uses the proton motive force (PMF) to complete protein translocation after the ATP-dependent function of SecA. In Rhodobacter capsulatus (strain ATCC BAA-309 / NBRC 16581 / SB1003), this protein is Protein translocase subunit SecF.